A 50-amino-acid polypeptide reads, in one-letter code: Sperm protamine P1 (50 aa).

Cystine bridges form between Cys7–Cys15 and Cys38–Cys46.

Belongs to the protamine P1 family. Cross-linked by interchain disulfide bonds around the DNA-helix. In terms of tissue distribution, testis.

The protein localises to the nucleus. It localises to the chromosome. Protamines substitute for histones in the chromatin of sperm during the haploid phase of spermatogenesis. They compact sperm DNA into a highly condensed, stable and inactive complex. The sequence is that of Sperm protamine P1 (PRM1) from Equus caballus (Horse).